Reading from the N-terminus, the 113-residue chain is UPF0342 protein SZO_10960 (113 aa).

It belongs to the UPF0342 family.

This Streptococcus equi subsp. zooepidemicus (strain H70) protein is UPF0342 protein SZO_10960.